A 342-amino-acid chain; its full sequence is Isopentenyl-diphosphate delta-isomerase (342 aa).

Residue 11 to 12 coordinates substrate; that stretch reads RK. FMN is bound by residues S68, 69 to 71, S99, and N128; that span reads SMT. 99–101 lines the substrate pocket; the sequence is SQR. Residue Q162 coordinates substrate. Position 163 (E163) interacts with Mg(2+). FMN contacts are provided by residues K194, S219, T224, 275-277, and 296-297; these read GVR and AK.

It belongs to the IPP isomerase type 2 family. Homooctamer. Dimer of tetramers. FMN serves as cofactor. Requires NADPH as cofactor. Mg(2+) is required as a cofactor.

It localises to the cytoplasm. It catalyses the reaction isopentenyl diphosphate = dimethylallyl diphosphate. Functionally, involved in the biosynthesis of isoprenoids. Catalyzes the 1,3-allylic rearrangement of the homoallylic substrate isopentenyl (IPP) to its allylic isomer, dimethylallyl diphosphate (DMAPP). This is Isopentenyl-diphosphate delta-isomerase from Legionella pneumophila (strain Corby).